The sequence spans 228 residues: Histone H1-III (228 aa).

Residues 1 to 18 show a composition bias toward low complexity; the sequence is MSDPAPEVASAVPVASPA. Disordered stretches follow at residues 1-44 and 98-228; these read MSDP…PPVS and LQTK…AKKA. An H15 domain is found at 39 to 113; that stretch reads THPPVSEMVV…GASGSFKLPA (75 aa). The segment covering 115-133 has biased composition (basic and acidic residues); that stretch reads AKKEKVAKTPKKAAGEKKP. 2 stretches are compositionally biased toward basic residues: residues 148 to 170 and 178 to 209; these read SIAKKPKAATATKVKKPVAKSTK and AAKKAAPKPKAAPKPKAATKPKKEVKPKKVAA. The segment covering 211 to 221 has biased composition (basic and acidic residues); the sequence is KPAEKKPEAAK.

Belongs to the histone H1/H5 family.

Its subcellular location is the nucleus. The protein localises to the chromosome. Histones H1 are necessary for the condensation of nucleosome chains into higher-order structures. This chain is Histone H1-III, found in Glyptotendipes barbipes (Midge).